The sequence spans 149 residues: Alpha-crystallin A chain (149 aa).

A sHSP domain is found at leucine 28 to serine 138. Residues histidine 55, histidine 76, glutamate 78, histidine 83, histidine 91, and histidine 130 each coordinate Zn(2+). Residues asparagine 125–serine 149 form a disordered region. Over residues histidine 130–proline 143 the composition is skewed to basic and acidic residues. An O-linked (GlcNAc) serine glycan is attached at serine 138.

The protein belongs to the small heat shock protein (HSP20) family. Heteropolymer composed of three CRYAA and one CRYAB subunits. Inter-subunit bridging via zinc ions enhances stability, which is crucial as there is no protein turn over in the lens. Can also form homodimers and homotetramers (dimers of dimers) which serve as the building blocks of homooligomers. Within homooligomers, the zinc-binding motif is created from residues of 3 different molecules. His-76 and Glu-78 from one molecule are ligands of the zinc ion, and His-83 and His-130 residues from additional molecules complete the site with tetrahedral coordination geometry.

It localises to the cytoplasm. It is found in the nucleus. Contributes to the transparency and refractive index of the lens. May act as a chaperone, preventing aggregation of various proteins under a wide range of stress conditions. The chain is Alpha-crystallin A chain (CRYAA) from Rana temporaria (European common frog).